The chain runs to 180 residues: ATP-dependent protease subunit HslV (180 aa).

Residue T2 is part of the active site. Positions 158, 161, and 164 each coordinate Na(+).

Belongs to the peptidase T1B family. HslV subfamily. A double ring-shaped homohexamer of HslV is capped on each side by a ring-shaped HslU homohexamer. The assembly of the HslU/HslV complex is dependent on binding of ATP.

The protein localises to the cytoplasm. The catalysed reaction is ATP-dependent cleavage of peptide bonds with broad specificity.. Its activity is regulated as follows. Allosterically activated by HslU binding. Its function is as follows. Protease subunit of a proteasome-like degradation complex believed to be a general protein degrading machinery. This is ATP-dependent protease subunit HslV from Baumannia cicadellinicola subsp. Homalodisca coagulata.